A 127-amino-acid chain; its full sequence is Fluoride-specific ion channel FluC (127 aa).

The next 4 helical transmembrane spans lie at 4-24 (LLLA…LLSM), 35-55 (LGTL…FAWF), 71-91 (TGFC…VFLL), and 103-123 (VFVN…LFSA). Na(+) is bound by residues glycine 75 and threonine 78.

The protein belongs to the fluoride channel Fluc/FEX (TC 1.A.43) family.

The protein localises to the cell inner membrane. The enzyme catalyses fluoride(in) = fluoride(out). Its activity is regulated as follows. Na(+) is not transported, but it plays an essential structural role and its presence is essential for fluoride channel function. Functionally, fluoride-specific ion channel. Important for reducing fluoride concentration in the cell, thus reducing its toxicity. The chain is Fluoride-specific ion channel FluC from Shigella flexneri serotype 5b (strain 8401).